The sequence spans 96 residues: Co-chaperonin GroES (96 aa).

This sequence belongs to the GroES chaperonin family. Heptamer of 7 subunits arranged in a ring. Interacts with the chaperonin GroEL.

It localises to the cytoplasm. Its function is as follows. Together with the chaperonin GroEL, plays an essential role in assisting protein folding. The GroEL-GroES system forms a nano-cage that allows encapsulation of the non-native substrate proteins and provides a physical environment optimized to promote and accelerate protein folding. GroES binds to the apical surface of the GroEL ring, thereby capping the opening of the GroEL channel. In Leptothrix cholodnii (strain ATCC 51168 / LMG 8142 / SP-6) (Leptothrix discophora (strain SP-6)), this protein is Co-chaperonin GroES.